The sequence spans 169 residues: Ribosome maturation factor RimM (169 aa).

Residues 94–168 (EEGQYYYHQI…KVIVELLEGL (75 aa)) enclose the PRC barrel domain.

Belongs to the RimM family. Binds ribosomal protein uS19.

It localises to the cytoplasm. In terms of biological role, an accessory protein needed during the final step in the assembly of 30S ribosomal subunit, possibly for assembly of the head region. Essential for efficient processing of 16S rRNA. May be needed both before and after RbfA during the maturation of 16S rRNA. It has affinity for free ribosomal 30S subunits but not for 70S ribosomes. In Limosilactobacillus fermentum (strain NBRC 3956 / LMG 18251) (Lactobacillus fermentum), this protein is Ribosome maturation factor RimM.